A 98-amino-acid chain; its full sequence is N(2)-fixation sustaining protein CowN (98 aa).

The protein belongs to the CowN family.

Its function is as follows. Is required to sustain N(2)-dependent growth in the presence of low levels of carbon monoxide (CO). Probably acts by protecting the N(2) fixation ability of the nitrogenase complex, which is inactivated in the presence of CO. This chain is N(2)-fixation sustaining protein CowN, found in Dechloromonas aromatica (strain RCB).